The sequence spans 969 residues: Protein translocase subunit SecA (969 aa).

ATP-binding positions include glutamine 99, 117–121 (GEGKT), and aspartate 631.

The protein belongs to the SecA family. Monomer and homodimer. Part of the essential Sec protein translocation apparatus which comprises SecA, SecYEG and auxiliary proteins SecDF. Other proteins may also be involved.

The protein resides in the cell inner membrane. It is found in the cytoplasm. It catalyses the reaction ATP + H2O + cellular proteinSide 1 = ADP + phosphate + cellular proteinSide 2.. Part of the Sec protein translocase complex. Interacts with the SecYEG preprotein conducting channel. Has a central role in coupling the hydrolysis of ATP to the transfer of proteins into and across the cell membrane, serving as an ATP-driven molecular motor driving the stepwise translocation of polypeptide chains across the membrane. This is Protein translocase subunit SecA from Chlamydia trachomatis serovar L2 (strain ATCC VR-902B / DSM 19102 / 434/Bu).